We begin with the raw amino-acid sequence, 460 residues long: Bifunctional protein GlmU (460 aa).

The interval 1–228 (MKNYALVLAA…NSLAMGVNDL (228 aa)) is pyrophosphorylase. UDP-N-acetyl-alpha-D-glucosamine contacts are provided by residues 8-11 (LAAG), lysine 22, glutamine 72, and 77-78 (GT). Mg(2+) is bound at residue aspartate 102. Residues glycine 139, glutamate 154, asparagine 169, and asparagine 226 each coordinate UDP-N-acetyl-alpha-D-glucosamine. Residue asparagine 226 participates in Mg(2+) binding. The segment at 229–249 (YAISKAEKYLREYINKDHMLN) is linker. Residues 250-460 (GVSMINPETI…LISPKPKKEE (211 aa)) form an N-acetyltransferase region. 2 residues coordinate UDP-N-acetyl-alpha-D-glucosamine: arginine 331 and lysine 349. The Proton acceptor role is filled by histidine 361. UDP-N-acetyl-alpha-D-glucosamine contacts are provided by tyrosine 364 and asparagine 375. Acetyl-CoA contacts are provided by residues 384–385 (NY), alanine 421, and arginine 438.

This sequence in the N-terminal section; belongs to the N-acetylglucosamine-1-phosphate uridyltransferase family. In the C-terminal section; belongs to the transferase hexapeptide repeat family. Homotrimer. It depends on Mg(2+) as a cofactor.

Its subcellular location is the cytoplasm. It catalyses the reaction alpha-D-glucosamine 1-phosphate + acetyl-CoA = N-acetyl-alpha-D-glucosamine 1-phosphate + CoA + H(+). The catalysed reaction is N-acetyl-alpha-D-glucosamine 1-phosphate + UTP + H(+) = UDP-N-acetyl-alpha-D-glucosamine + diphosphate. It participates in nucleotide-sugar biosynthesis; UDP-N-acetyl-alpha-D-glucosamine biosynthesis; N-acetyl-alpha-D-glucosamine 1-phosphate from alpha-D-glucosamine 6-phosphate (route II): step 2/2. The protein operates within nucleotide-sugar biosynthesis; UDP-N-acetyl-alpha-D-glucosamine biosynthesis; UDP-N-acetyl-alpha-D-glucosamine from N-acetyl-alpha-D-glucosamine 1-phosphate: step 1/1. It functions in the pathway bacterial outer membrane biogenesis; LPS lipid A biosynthesis. Catalyzes the last two sequential reactions in the de novo biosynthetic pathway for UDP-N-acetylglucosamine (UDP-GlcNAc). The C-terminal domain catalyzes the transfer of acetyl group from acetyl coenzyme A to glucosamine-1-phosphate (GlcN-1-P) to produce N-acetylglucosamine-1-phosphate (GlcNAc-1-P), which is converted into UDP-GlcNAc by the transfer of uridine 5-monophosphate (from uridine 5-triphosphate), a reaction catalyzed by the N-terminal domain. This chain is Bifunctional protein GlmU, found in Acholeplasma laidlawii (strain PG-8A).